Reading from the N-terminus, the 491-residue chain is 2,3-bisphosphoglycerate-independent phosphoglycerate mutase (491 aa).

The Mn(2+) site is built by aspartate 11 and serine 61. The Phosphoserine intermediate role is filled by serine 61. Substrate-binding positions include histidine 118, 147-148, arginine 177, arginine 183, 247-250, and lysine 320; these read RD and RNDR. The Mn(2+) site is built by aspartate 386, histidine 390, aspartate 427, histidine 428, and histidine 445.

It belongs to the BPG-independent phosphoglycerate mutase family. In terms of assembly, monomer. The cofactor is Mn(2+).

The catalysed reaction is (2R)-2-phosphoglycerate = (2R)-3-phosphoglycerate. It functions in the pathway carbohydrate degradation; glycolysis; pyruvate from D-glyceraldehyde 3-phosphate: step 3/5. Its function is as follows. Catalyzes the interconversion of 2-phosphoglycerate and 3-phosphoglycerate. This is 2,3-bisphosphoglycerate-independent phosphoglycerate mutase from Helicobacter pylori (strain J99 / ATCC 700824) (Campylobacter pylori J99).